Reading from the N-terminus, the 632-residue chain is Arginine--tRNA ligase (632 aa).

A 'HIGH' region motif is present at residues 120-130; that stretch reads ANPIHPLHIGH.

The protein belongs to the class-I aminoacyl-tRNA synthetase family.

It localises to the cytoplasm. It carries out the reaction tRNA(Arg) + L-arginine + ATP = L-arginyl-tRNA(Arg) + AMP + diphosphate. The sequence is that of Arginine--tRNA ligase from Pyrobaculum islandicum (strain DSM 4184 / JCM 9189 / GEO3).